Consider the following 1406-residue polypeptide: DNA-directed RNA polymerase subunit beta' (1406 aa).

Zn(2+) is bound by residues C70, C72, C85, and C88. Mg(2+)-binding residues include D460, D462, and D464. C814, C889, C896, and C899 together coordinate Zn(2+).

It belongs to the RNA polymerase beta' chain family. As to quaternary structure, the RNAP catalytic core consists of 2 alpha, 1 beta, 1 beta' and 1 omega subunit. When a sigma factor is associated with the core the holoenzyme is formed, which can initiate transcription. Mg(2+) serves as cofactor. It depends on Zn(2+) as a cofactor.

The catalysed reaction is RNA(n) + a ribonucleoside 5'-triphosphate = RNA(n+1) + diphosphate. Its function is as follows. DNA-dependent RNA polymerase catalyzes the transcription of DNA into RNA using the four ribonucleoside triphosphates as substrates. The polypeptide is DNA-directed RNA polymerase subunit beta' (Stenotrophomonas maltophilia (strain K279a)).